The primary structure comprises 86 residues: Defensin-like protein a (86 aa).

The first 23 residues, 1 to 23 (MRCSVLFVVSYVIMSLLISHVQG), serve as a signal peptide directing secretion. 4 disulfide bridges follow: Cys-33–Cys-81, Cys-43–Cys-67, Cys-51–Cys-76, and Cys-65–Cys-78.

The protein belongs to the DEFL family. Expressed specifically in anthers.

The protein resides in the secreted. Involved in self-incompatibility. The chain is Defensin-like protein a (SCRa) from Arabidopsis lyrata (Lyre-leaved rock-cress).